We begin with the raw amino-acid sequence, 160 residues long: Putative pre-16S rRNA nuclease (160 aa).

This sequence belongs to the YqgF nuclease family.

The protein resides in the cytoplasm. Its function is as follows. Could be a nuclease involved in processing of the 5'-end of pre-16S rRNA. This Gluconobacter oxydans (strain 621H) (Gluconobacter suboxydans) protein is Putative pre-16S rRNA nuclease.